A 487-amino-acid polypeptide reads, in one-letter code: MTDFFNENLTSLHKKLVDKEISATELTKEALNKSKSSQSEINAFITIDDEGALKRAAEIDAVGIDPDNILSGIPFAIKDNIVTKGLKTTAASHILDNFVPVYDATVIEKLNELGIVTIGKTNMDEFAMGGSTETSYFGKTANAWDHTKVPGGSSGGSASSVASGVIPVALGSDTGGSIRQPAAFNGIVGLKPTYGRVSRWGLIAFGSSLDQIGPLTRTVEDNARVLAAISGKDQRDTTTEDQSVPDFTKGIKKGVKDLRIGVPKEYFAKGIDEGVKDVVKKAIAKYESLGAKVDEVSLPHSKYGIAAYYILASSEASSNLERFDGIRYGFSARQDGQTLEDLYVRTRSEGFGDEVKRRIMLGTFALSAGFYDAYFKKAAQVRTLIVNDFAKVFENHDIILGPTTTSPAFDLGSENDDPVKMYMNDLLTIPLNLAGLPGMSINAGFTDGLPVGLQIIGKRFDESTIYKTAYAFEQDSQLFTKHPGVNF.

Catalysis depends on charge relay system residues Lys-78 and Ser-153. Catalysis depends on Ser-177, which acts as the Acyl-ester intermediate.

The protein belongs to the amidase family. GatA subfamily. As to quaternary structure, heterotrimer of A, B and C subunits.

It carries out the reaction L-glutamyl-tRNA(Gln) + L-glutamine + ATP + H2O = L-glutaminyl-tRNA(Gln) + L-glutamate + ADP + phosphate + H(+). Functionally, allows the formation of correctly charged Gln-tRNA(Gln) through the transamidation of misacylated Glu-tRNA(Gln) in organisms which lack glutaminyl-tRNA synthetase. The reaction takes place in the presence of glutamine and ATP through an activated gamma-phospho-Glu-tRNA(Gln). The chain is Glutamyl-tRNA(Gln) amidotransferase subunit A from Oenococcus oeni (strain ATCC BAA-331 / PSU-1).